Here is an 825-residue protein sequence, read N- to C-terminus: NT-3 growth factor receptor (825 aa).

An N-terminal signal peptide occupies residues 1–31 (MDVSLCPAKCSFWRIFLLGSVWLDYVGSVLA). Disulfide bonds link cysteine 32–cysteine 38 and cysteine 36–cysteine 45. Residues 32-429 (CPANCVCSKT…TVTHKPEEDT (398 aa)) lie on the Extracellular side of the membrane. N-linked (GlcNAc...) asparagine glycans are attached at residues asparagine 68, asparagine 72, and asparagine 79. 2 LRR repeats span residues 104–125 (GLQKLTIKNSGLRSIQPRAFAK) and 128–149 (HLRYINLSSNRLTTLSWQLFQT). Asparagine 133 and asparagine 163 each carry an N-linked (GlcNAc...) asparagine glycan. The LRRCT domain maps to 160–209 (NFFNCSCDIRWMQLWQEQGEAKLNSQNLYCINTDGSQLPLFRMNISQCDL). Cystine bridges form between cysteine 164–cysteine 189 and cysteine 166–cysteine 207. N-linked (GlcNAc...) asparagine glycosylation is found at asparagine 203, asparagine 218, asparagine 232, asparagine 259, asparagine 267, asparagine 272, and asparagine 294. Ig-like C2-type domains lie at 210–300 (PEIS…VALT) and 309–382 (SLEE…IAKN). A disulfide bond links cysteine 231 and cysteine 284. The cysteines at positions 320 and 362 are disulfide-linked. 2 N-linked (GlcNAc...) asparagine glycosylation sites follow: asparagine 375 and asparagine 388. A helical membrane pass occupies residues 430–453 (FGVSIAVGLAAFACVLLVVLFVMI). Over 454 to 825 (NKYGRRSKFG…ATPIYLDILG (372 aa)) the chain is Cytoplasmic. Residue serine 493 is modified to Phosphoserine. At tyrosine 516 the chain carries Phosphotyrosine; by autocatalysis. Residues 538-825 (IVLKRELGEG…ATPIYLDILG (288 aa)) enclose the Protein kinase domain. ATP-binding positions include 544 to 552 (LGEGAFGKV) and lysine 572. Aspartate 679 acts as the Proton acceptor in catalysis. 3 positions are modified to phosphotyrosine; by autocatalysis: tyrosine 705, tyrosine 709, and tyrosine 710.

The protein belongs to the protein kinase superfamily. Tyr protein kinase family. Insulin receptor subfamily. As to quaternary structure, exists in a dynamic equilibrium between monomeric (low affinity) and dimeric (high affinity) structures. Binds SH2B2. Interacts with SQSTM1 and KIDINS220. Interacts with PTPRS. Interacts with MAPK8IP3/JIP3. Ligand-mediated auto-phosphorylation.

The protein resides in the membrane. The catalysed reaction is L-tyrosyl-[protein] + ATP = O-phospho-L-tyrosyl-[protein] + ADP + H(+). Its function is as follows. Receptor tyrosine kinase involved in nervous system and probably heart development. Upon binding of its ligand NTF3/neurotrophin-3, NTRK3 autophosphorylates and activates different signaling pathways, including the phosphatidylinositol 3-kinase/AKT and the MAPK pathways, that control cell survival and differentiation. This chain is NT-3 growth factor receptor (NTRK3), found in Pan troglodytes (Chimpanzee).